Here is a 256-residue protein sequence, read N- to C-terminus: Small ribosomal subunit protein eS1 (256 aa).

Residue A2 is modified to N-acetylalanine; partial.

It belongs to the eukaryotic ribosomal protein eS1 family. Component of the small ribosomal subunit. Mature ribosomes consist of a small (40S) and a large (60S) subunit. The 40S subunit contains about 33 different proteins and 1 molecule of RNA (18S). The 60S subunit contains about 49 different proteins and 3 molecules of RNA (25S, 5.8S and 5S).

It localises to the cytoplasm. The protein is Small ribosomal subunit protein eS1 of Meyerozyma guilliermondii (strain ATCC 6260 / CBS 566 / DSM 6381 / JCM 1539 / NBRC 10279 / NRRL Y-324) (Yeast).